A 360-amino-acid polypeptide reads, in one-letter code: LETM1 domain-containing protein 1 (360 aa).

Positions 1–110 (MALSRVCWAR…KKARRIKTNM (110 aa)) are required and sufficient for mitochondrial import. The Cytoplasmic portion of the chain corresponds to 1 to 137 (MALSRVCWAR…LRQFRRDVTK (137 aa)). Residues 138 to 158 (CLFLGILSIPPFANYLVFLLM) form a helical membrane-spanning segment. Topologically, residues 159–360 (YLFPRQLLIR…LSINYVGSRR (202 aa)) are mitochondrial intermembrane. The 175-residue stretch at 186-360 (LRKQSHPEIL…LSINYVGSRR (175 aa)) folds into the Letm1 RBD domain.

In terms of assembly, interacts with BRI3BP. Interacts (via C-terminal) with SMARCA4; the interaction regulates transcriptional expression of thermogenic genes in brown adipose tissue.

The protein localises to the mitochondrion outer membrane. It localises to the nucleus. The protein resides in the mitochondrion inner membrane. Functionally, plays an essential role for mitochondrial structure and function, as well as thermogenesis of brown adipocytes. In brown adipose tissue also localizes in the nucleus where it interacts with the chromatin remodeler SMARCA4 to regulate thermogenic genes expression, such as UCP1. May regulate phagocytosis and inflammatory responses to lipopolysaccharide in macrophages. Involved in tumorigenesis and may function as a negative regulator of the p53/TP53. The chain is LETM1 domain-containing protein 1 from Bos taurus (Bovine).